A 425-amino-acid chain; its full sequence is UDP-N-acetylglucosamine 1-carboxyvinyltransferase (425 aa).

A phosphoenolpyruvate-binding site is contributed by 22–23 (KN). Arg-98 is a binding site for UDP-N-acetyl-alpha-D-glucosamine. Cys-122 serves as the catalytic Proton donor. Cys-122 is subject to 2-(S-cysteinyl)pyruvic acid O-phosphothioketal. UDP-N-acetyl-alpha-D-glucosamine contacts are provided by residues 127–131 (RPVDQ), Asp-313, and Ile-335.

It belongs to the EPSP synthase family. MurA subfamily.

The protein resides in the cytoplasm. The enzyme catalyses phosphoenolpyruvate + UDP-N-acetyl-alpha-D-glucosamine = UDP-N-acetyl-3-O-(1-carboxyvinyl)-alpha-D-glucosamine + phosphate. It functions in the pathway cell wall biogenesis; peptidoglycan biosynthesis. Cell wall formation. Adds enolpyruvyl to UDP-N-acetylglucosamine. The chain is UDP-N-acetylglucosamine 1-carboxyvinyltransferase from Xylella fastidiosa (strain 9a5c).